The sequence spans 130 residues: Small ribosomal subunit protein uS9 (130 aa).

Belongs to the universal ribosomal protein uS9 family.

The sequence is that of Small ribosomal subunit protein uS9 from Salmonella paratyphi C (strain RKS4594).